The primary structure comprises 701 residues: Elongation factor G (701 aa).

The 283-residue stretch at 8–290 folds into the tr-type G domain; it reads ARYRNIGISA…AVIEYLPAPT (283 aa). GTP contacts are provided by residues 17 to 24, 88 to 92, and 142 to 145; these read AHIDAGKT, DTPGH, and NKMD.

Belongs to the TRAFAC class translation factor GTPase superfamily. Classic translation factor GTPase family. EF-G/EF-2 subfamily.

Its subcellular location is the cytoplasm. Catalyzes the GTP-dependent ribosomal translocation step during translation elongation. During this step, the ribosome changes from the pre-translocational (PRE) to the post-translocational (POST) state as the newly formed A-site-bound peptidyl-tRNA and P-site-bound deacylated tRNA move to the P and E sites, respectively. Catalyzes the coordinated movement of the two tRNA molecules, the mRNA and conformational changes in the ribosome. The chain is Elongation factor G from Sodalis glossinidius (strain morsitans).